Here is a 409-residue protein sequence, read N- to C-terminus: Serine/threonine transporter SstT (409 aa).

The next 9 helical transmembrane spans lie at Leu17–Ala37, Phe49–Ile69, Ile83–Phe103, Ala142–Phe162, Val180–Ala200, Leu218–Phe238, Gly301–Val321, Val331–Ile351, and Leu357–Ile377.

Belongs to the dicarboxylate/amino acid:cation symporter (DAACS) (TC 2.A.23) family.

The protein localises to the cell inner membrane. The catalysed reaction is L-serine(in) + Na(+)(in) = L-serine(out) + Na(+)(out). The enzyme catalyses L-threonine(in) + Na(+)(in) = L-threonine(out) + Na(+)(out). Involved in the import of serine and threonine into the cell, with the concomitant import of sodium (symport system). This chain is Serine/threonine transporter SstT, found in Pseudomonas aeruginosa (strain LESB58).